Here is a 162-residue protein sequence, read N- to C-terminus: NADH-quinone oxidoreductase subunit I (162 aa).

2 4Fe-4S ferredoxin-type domains span residues 52-82 (LRRYPNGEERCIACKLCEAICPAQAITIEAG) and 93-122 (TRYDIDMVKCIYCGFCQEACPVDAIVEGPN). [4Fe-4S] cluster contacts are provided by Cys-62, Cys-65, Cys-68, Cys-72, Cys-102, Cys-105, Cys-108, and Cys-112.

The protein belongs to the complex I 23 kDa subunit family. As to quaternary structure, NDH-1 is composed of 14 different subunits. Subunits NuoA, H, J, K, L, M, N constitute the membrane sector of the complex. It depends on [4Fe-4S] cluster as a cofactor.

It is found in the cell inner membrane. The catalysed reaction is a quinone + NADH + 5 H(+)(in) = a quinol + NAD(+) + 4 H(+)(out). In terms of biological role, NDH-1 shuttles electrons from NADH, via FMN and iron-sulfur (Fe-S) centers, to quinones in the respiratory chain. The immediate electron acceptor for the enzyme in this species is believed to be ubiquinone. Couples the redox reaction to proton translocation (for every two electrons transferred, four hydrogen ions are translocated across the cytoplasmic membrane), and thus conserves the redox energy in a proton gradient. The chain is NADH-quinone oxidoreductase subunit I from Azorhizobium caulinodans (strain ATCC 43989 / DSM 5975 / JCM 20966 / LMG 6465 / NBRC 14845 / NCIMB 13405 / ORS 571).